The chain runs to 542 residues: GMP synthase [glutamine-hydrolyzing] (542 aa).

In terms of domain architecture, Glutamine amidotransferase type-1 spans 28 to 218 (MIVILDFGSQ…VYHICECEPT (191 aa)). Residue Cys105 is the Nucleophile of the active site. Residues His192 and Glu194 contribute to the active site. Residues 219–417 (WTTEAFVDET…IGLPEEIVRR (199 aa)) enclose the GMPS ATP-PPase domain. 246-252 (SGGVDSS) lines the ATP pocket.

Homodimer.

It carries out the reaction XMP + L-glutamine + ATP + H2O = GMP + L-glutamate + AMP + diphosphate + 2 H(+). The protein operates within purine metabolism; GMP biosynthesis; GMP from XMP (L-Gln route): step 1/1. Catalyzes the synthesis of GMP from XMP. This chain is GMP synthase [glutamine-hydrolyzing], found in Crocosphaera subtropica (strain ATCC 51142 / BH68) (Cyanothece sp. (strain ATCC 51142)).